The following is a 1286-amino-acid chain: DNA-directed RNA polymerase 147 kDa polypeptide (1286 aa).

The protein belongs to the poxviridae DNA-directed RNA polymerase 147 kDa subunit family. As to quaternary structure, the DNA-dependent RNA polymerase used for intermediate and late genes expression consists of eight subunits Rpo30/OPG66, Rpo7/OPG90, Rpo22/OPG103, Rpo147/OPG105, Rpo18/OPG119, Rpo19/OPG131, Rpo132/OPG151 and Rpo35/OPG156. The same holoenzyme, with the addition of the transcription-specificity factor OPG109, is used for early gene expression.

It localises to the virion. It catalyses the reaction RNA(n) + a ribonucleoside 5'-triphosphate = RNA(n+1) + diphosphate. Its function is as follows. Part of the DNA-dependent RNA polymerase which catalyzes the transcription of viral DNA into RNA using the four ribonucleoside triphosphates as substrates. Responsible for the transcription of early, intermediate and late genes. DNA-dependent RNA polymerase associates with the early transcription factor (ETF), itself composed of OPG118 and OPG133, thereby allowing the early genes transcription. Late transcription, and probably also intermediate transcription, require newly synthesized RNA polymerase. In Variola virus (isolate Human/India/Ind3/1967) (VARV), this protein is DNA-directed RNA polymerase 147 kDa polypeptide (OPG105).